The chain runs to 421 residues: UDP-N-acetylglucosamine 1-carboxyvinyltransferase (421 aa).

26 to 27 (KN) is a binding site for phosphoenolpyruvate. Arg96 provides a ligand contact to UDP-N-acetyl-alpha-D-glucosamine. Residue Asp120 is the Proton donor of the active site. UDP-N-acetyl-alpha-D-glucosamine is bound by residues Asp308 and Val330.

Belongs to the EPSP synthase family. MurA subfamily.

It localises to the cytoplasm. It carries out the reaction phosphoenolpyruvate + UDP-N-acetyl-alpha-D-glucosamine = UDP-N-acetyl-3-O-(1-carboxyvinyl)-alpha-D-glucosamine + phosphate. Its pathway is cell wall biogenesis; peptidoglycan biosynthesis. Cell wall formation. Adds enolpyruvyl to UDP-N-acetylglucosamine. This Corynebacterium efficiens (strain DSM 44549 / YS-314 / AJ 12310 / JCM 11189 / NBRC 100395) protein is UDP-N-acetylglucosamine 1-carboxyvinyltransferase.